A 510-amino-acid polypeptide reads, in one-letter code: Pre-glycoprotein polyprotein GP complex (510 aa).

The N-myristoyl glycine; by host moiety is linked to residue Gly-2. Over 2–17 the chain is Extracellular; it reads GQFITLMQSIPEALNM. Residues 18 to 32 form a helical membrane-spanning segment; that stretch reads AFNVALVIVSLLCVT. Position 33 (Lys-33) is a topological domain, cytoplasmic. A helical transmembrane segment spans residues 34-53; it reads GLINLWKCGIIQLLMFLALA. Extracellular-facing segments span residues 54-58 and 59-448; these read GRSCD and GEYK…ALAD. Cys-57 is a binding site for Zn(2+). N-linked (GlcNAc...) asparagine; by host glycosylation is found at Asn-75, Asn-90, Asn-101, Asn-112, Asn-117, Asn-122, Asn-133, Asn-182, Asn-218, and Asn-243. 4 disulfides stabilise this stretch: Cys-87–Cys-250, Cys-295–Cys-308, Cys-317–Cys-326, and Cys-380–Cys-401. 4 N-linked (GlcNAc...) asparagine; by host glycosylation sites follow: Asn-381, Asn-389, Asn-406, and Asn-411. A helical transmembrane segment spans residues 449–469; that stretch reads LCFWSLVFFTTTVFFQLIGIP. The Cytoplasmic portion of the chain corresponds to 470–510; that stretch reads THRHLIGEGCPKPHRLTSNSLCSCGFYKIPKKPFRWVRKGK. Residues His-471, His-473, Cys-479, His-483, Cys-491, and Cys-493 each coordinate Zn(2+).

It belongs to the arenaviridae GPC protein family. As to quaternary structure, homotetramer; disulfide-linked. In terms of assembly, homotetramer. GP2 homotetramers bind through ionic interactions with GP1 homotetramers to form the GP complex together with the stable signal peptide. The GP-C polyprotein interacts with the host protease MBTPS1/SKI-1 resulting in the polyprotein processing. Specific enzymatic cleavages in vivo yield mature proteins. GP-C polyprotein is cleaved in the endoplasmic reticulum by the host protease MBTPS1. Only cleaved glycoprotein is incorporated into virions. Post-translationally, the SSP remains stably associated with the GP complex following cleavage by signal peptidase and plays crucial roles in the trafficking of GP through the secretory pathway. In terms of processing, myristoylation is necessary for GP2-mediated fusion activity.

The protein resides in the virion membrane. It is found in the host endoplasmic reticulum membrane. It localises to the host Golgi apparatus membrane. Its subcellular location is the host cell membrane. In terms of biological role, class I viral fusion protein that directs fusion of viral and host endosomal membranes, leading to delivery of the nucleocapsid into the cytoplasm. Membrane fusion is mediated by irreversible conformational changes induced upon acidification in the endosome. Stable signal peptide (SSP): cleaved and functions as a signal peptide. In addition, it is also retained as the third component of the GP complex. The SSP is required for efficient glycoprotein expression, post-translational maturation cleavage of GP1 and GP2, glycoprotein transport to the cell surface plasma membrane, formation of infectious virus particles, and acid pH-dependent glycoprotein-mediated cell fusion. Functionally, interacts with the host receptor. The chain is Pre-glycoprotein polyprotein GP complex from Pirital mammarenavirus (isolate Rat/Venezuela/VAV-488/1995) (PIRV).